A 552-amino-acid chain; its full sequence is uncharacterized protein (552 aa).

A DhaL domain is found at 8–200 (KLFADMIIQG…LLCVYEGFLK (193 aa)).

This is an uncharacterized protein from Staphylococcus epidermidis (strain ATCC 12228 / FDA PCI 1200).